A 359-amino-acid chain; its full sequence is Membrane-bound lytic murein transglycosylase C (359 aa).

The first 16 residues, 1 to 16 (MKKYLALALIAPLLIS), serve as a signal peptide directing secretion. C17 is lipidated: N-palmitoyl cysteine. C17 carries the S-diacylglycerol cysteine lipid modification.

Belongs to the transglycosylase Slt family.

Its subcellular location is the cell outer membrane. The enzyme catalyses Exolytic cleavage of the (1-&gt;4)-beta-glycosidic linkage between N-acetylmuramic acid (MurNAc) and N-acetylglucosamine (GlcNAc) residues in peptidoglycan, from either the reducing or the non-reducing ends of the peptidoglycan chains, with concomitant formation of a 1,6-anhydrobond in the MurNAc residue.. Its function is as follows. Murein-degrading enzyme. May play a role in recycling of muropeptides during cell elongation and/or cell division. The polypeptide is Membrane-bound lytic murein transglycosylase C (Shigella flexneri serotype 5b (strain 8401)).